The primary structure comprises 526 residues: Neutrophil cytosol factor 2 (526 aa).

TPR repeat units lie at residues 37-70, 71-104, and 121-154; these read SRIC…DKHL, AVAY…LRGN, and CEVL…KSEP. Phosphothreonine is present on Thr233. The 60-residue stretch at 240–299 folds into the SH3 1 domain; it reads LEGEAHRVLFGFVPETKEELQVMPGNIVFVLKKGNDNWATVMFNGQKGLVPCNYLEPVEL. Over residues 303–315 the composition is skewed to low complexity; it reads PQQQPQEESSPQS. Positions 303–346 are disordered; the sequence is PQQQPQEESSPQSDIPAPPSSKAPGRPQLSPGQKQKEEPKEVKL. The segment covering 336–345 has biased composition (basic and acidic residues); it reads KQKEEPKEVK. Residues 351 to 429 form the PB1 domain; it reads PYTLKVHYKY…YCLTLWCENT (79 aa). Residue Ser399 is modified to Phosphoserine. Residues 433–458 form a disordered region; that stretch reads QGFPDEPKESEKADANNQTTEPQLKK. Residues 437-446 are compositionally biased toward basic and acidic residues; the sequence is DEPKESEKAD. The region spanning 457-516 is the SH3 2 domain; it reads KKGSQVEALFSYEATQPEDLEFQEGDIILVLSKVNEEWLEGECKGKVGIFPKVFVEDCAT.

This sequence belongs to the NCF2/NOXA1 family. As to quaternary structure, component of the phagocyte NADPH oxidase complex composed of an obligatory core heterodimer formed by the membrane proteins CYBA and CYBB and the cytosolic regulatory subunits NCF1/p47-phox, NCF2/p67-phox, NCF4/p40-phox and the small GTPase RAC1 or RAC2. Part of a cytosolic complex composed at least by NCF1, NCF2 and NCF4. Interacts with NCF4. Interacts (via the C-terminal SH3 domain) with NCF1 (via C-terminus). Interacts with SYTL1 and RAC1. May interact with NOXO1. Interacts with S100A8 and calprotectin (S100A8/9). Interacts with GBP7 (via GB1/RHD3-type G domain). Interacts with CYBB; the interaction is enhanced in the presence of GBP7.

The protein localises to the cytoplasm. Its function is as follows. Subunit of the phagocyte NADPH oxidase complex that mediates the transfer of electrons from cytosolic NADPH to O2 to produce the superoxide anion (O2(-)). In the activated complex, electrons are first transferred from NADPH to flavin adenine dinucleotide (FAD) and subsequently transferred via two heme molecules to molecular oxygen, producing superoxide through an outer-sphere reaction. Activation of the NADPH oxidase complex is initiated by the assembly of cytosolic subunits of the NADPH oxidase complex with the core NADPH oxidase complex to form a complex at the plasma membrane or phagosomal membrane. This activation process is initiated by phosphorylation dependent binding of the cytosolic NCF1/p47-phox subunit to the C-terminus of CYBA/p22-phox. The protein is Neutrophil cytosol factor 2 of Homo sapiens (Human).